Here is a 442-residue protein sequence, read N- to C-terminus: 3-phosphoshikimate 1-carboxyvinyltransferase (442 aa).

Residues Lys27, Ser28, and Arg32 each coordinate 3-phosphoshikimate. Residue Lys27 coordinates phosphoenolpyruvate. 2 residues coordinate phosphoenolpyruvate: Gly100 and Arg128. 3-phosphoshikimate contacts are provided by Ser174, Ser175, Gln176, Ser204, Asp321, and Lys348. Gln176 lines the phosphoenolpyruvate pocket. Catalysis depends on Asp321, which acts as the Proton acceptor. Residues Arg352, Arg394, and Lys424 each coordinate phosphoenolpyruvate.

It belongs to the EPSP synthase family. Monomer.

The protein resides in the cytoplasm. It catalyses the reaction 3-phosphoshikimate + phosphoenolpyruvate = 5-O-(1-carboxyvinyl)-3-phosphoshikimate + phosphate. Its pathway is metabolic intermediate biosynthesis; chorismate biosynthesis; chorismate from D-erythrose 4-phosphate and phosphoenolpyruvate: step 6/7. In terms of biological role, catalyzes the transfer of the enolpyruvyl moiety of phosphoenolpyruvate (PEP) to the 5-hydroxyl of shikimate-3-phosphate (S3P) to produce enolpyruvyl shikimate-3-phosphate and inorganic phosphate. The protein is 3-phosphoshikimate 1-carboxyvinyltransferase of Herminiimonas arsenicoxydans.